We begin with the raw amino-acid sequence, 138 residues long: Small ribosomal subunit protein uS11c (138 aa).

The tract at residues 1 to 23 is disordered; that stretch reads MKKPIPRIGSRRNGRIGSRKNGR.

Belongs to the universal ribosomal protein uS11 family. Part of the 30S ribosomal subunit.

It is found in the plastid. Its subcellular location is the chloroplast. This is Small ribosomal subunit protein uS11c from Amborella trichopoda.